We begin with the raw amino-acid sequence, 236 residues long: 1-(5-phosphoribosyl)-5-[(5-phosphoribosylamino)methylideneamino] imidazole-4-carboxamide isomerase (236 aa).

D8 (proton acceptor) is an active-site residue. Catalysis depends on D127, which acts as the Proton donor.

It belongs to the HisA/HisF family.

It localises to the cytoplasm. It carries out the reaction 1-(5-phospho-beta-D-ribosyl)-5-[(5-phospho-beta-D-ribosylamino)methylideneamino]imidazole-4-carboxamide = 5-[(5-phospho-1-deoxy-D-ribulos-1-ylimino)methylamino]-1-(5-phospho-beta-D-ribosyl)imidazole-4-carboxamide. The protein operates within amino-acid biosynthesis; L-histidine biosynthesis; L-histidine from 5-phospho-alpha-D-ribose 1-diphosphate: step 4/9. This chain is 1-(5-phosphoribosyl)-5-[(5-phosphoribosylamino)methylideneamino] imidazole-4-carboxamide isomerase, found in Campylobacter concisus (strain 13826).